A 247-amino-acid chain; its full sequence is ATP synthase subunit a, chloroplastic (247 aa).

A run of 5 helical transmembrane segments spans residues 36–56 (GQVL…SIAG), 95–115 (IPFL…GALI), 134–154 (INTT…AGFS), 199–219 (LVVG…IMLL), and 220–240 (GLFT…AYIG).

This sequence belongs to the ATPase A chain family. In terms of assembly, F-type ATPases have 2 components, CF(1) - the catalytic core - and CF(0) - the membrane proton channel. CF(1) has five subunits: alpha(3), beta(3), gamma(1), delta(1), epsilon(1). CF(0) has four main subunits: a, b, b' and c.

It localises to the plastid. The protein localises to the chloroplast thylakoid membrane. Key component of the proton channel; it plays a direct role in the translocation of protons across the membrane. This is ATP synthase subunit a, chloroplastic from Tupiella akineta (Green alga).